Reading from the N-terminus, the 363-residue chain is Ribonuclease P protein subunit p40 (363 aa).

In terms of assembly, component of nuclear RNase P and RNase MRP ribonucleoproteins. RNase P consists of a catalytic RNA moiety and about 10 protein subunits; POP1, POP4, POP5, POP7, RPP14, RPP21, RPP25, RPP30, RPP38 and RPP40. Within the RNase P complex, POP1, POP7 and RPP25 form the 'finger' subcomplex, POP5, RPP14, RPP40 and homodimeric RPP30 form the 'palm' subcomplex, and RPP21, POP4 and RPP38 form the 'wrist' subcomplex. All subunits of the RNase P complex interact with the catalytic RNA. Several subunits of RNase P are also part of the RNase MRP complex. RNase MRP consists of a catalytic RNA moiety and about 8 protein subunits; POP1, POP7, RPP25, RPP30, RPP38, RPP40 and possibly also POP4 and POP5.

Its subcellular location is the nucleus. It is found in the nucleolus. Component of ribonuclease P, a ribonucleoprotein complex that generates mature tRNA molecules by cleaving their 5'-ends. Also a component of the MRP ribonuclease complex, which cleaves pre-rRNA sequences. In Rattus norvegicus (Rat), this protein is Ribonuclease P protein subunit p40 (Rpp40).